The following is a 354-amino-acid chain: Rhodopsin (354 aa).

The Extracellular portion of the chain corresponds to 1–36; that stretch reads MNGTEGPNFYIPMSNKTGVVRSPFDYPQYYLAEPWK. An N-linked (GlcNAc...) (hybrid) asparagine glycan is attached at Asn-2. N-linked (GlcNAc...) asparagine glycosylation is present at Asn-15. A helical transmembrane segment spans residues 37–61; sequence YSVLAAYMFLLILLGLPINFMTLYV. Residues 62–73 lie on the Cytoplasmic side of the membrane; the sequence is TIQHKKLRTPLN. The chain crosses the membrane as a helical span at residues 74 to 96; that stretch reads YILLNLGVCNHFMVLCGFTITMY. Topologically, residues 97 to 110 are extracellular; the sequence is TSLHGYFVFGQTGC. Cys-110 and Cys-187 are disulfide-bonded. The chain crosses the membrane as a helical span at residues 111–133; sequence YFEGFFATLGGEIALWSLVVLAI. Residues 134 to 136 carry the 'Ionic lock' involved in activated form stabilization motif; the sequence is ERY. At 134-152 the chain is on the cytoplasmic side; that stretch reads ERYIVVCKPMSNFRFGENH. Residues 153–173 traverse the membrane as a helical segment; sequence AMMGVAFTWIMALACAVPPLF. Residues 174–202 are Extracellular-facing; sequence GWSRYIPEGMQCSCGVDYYTLKPEVNNES. The chain crosses the membrane as a helical span at residues 203–224; the sequence is FVIYMFVVHFLIPLIIISFCYG. Topologically, residues 225-252 are cytoplasmic; the sequence is RLVCTVKEAAAQQQESATTQKAEKEVTR. Residues 253–274 traverse the membrane as a helical segment; that stretch reads MVIIMVIFFLICWVPYAYVAFY. Over 275–286 the chain is Extracellular; that stretch reads IFTHQGSEFGPI. Residues 287-308 form a helical membrane-spanning segment; sequence FMTVPAFFAKSSAIYNPVIYIM. N6-(retinylidene)lysine is present on Lys-296. The Cytoplasmic segment spans residues 309-354; that stretch reads LNKQFRNCMITTLCCGKNPFGDDDASSAATSKTEATSVSTSQVSPA. Residues Cys-322 and Cys-323 are each lipidated (S-palmitoyl cysteine). The interval 332–354 is disordered; that stretch reads DASSAATSKTEATSVSTSQVSPA. Residues 334 to 354 show a composition bias toward low complexity; it reads SSAATSKTEATSVSTSQVSPA.

It belongs to the G-protein coupled receptor 1 family. Opsin subfamily. Post-translationally, contains one covalently linked retinal chromophore. Upon light absorption, the covalently bound 11-cis-retinal is converted to all-trans-retinal. After hydrolysis of the Schiff base and release of the covalently bound all-trans-retinal, active rhodopsin is regenerated by binding of a fresh molecule of 11-cis-retinal. In terms of tissue distribution, detected in retina rod photoreceptor cell outer segments (at protein level). Detected in retina.

Its subcellular location is the membrane. It is found in the cell projection. The protein resides in the cilium. The protein localises to the photoreceptor outer segment. Functionally, photoreceptor required for image-forming vision at low light intensity. Required for photoreceptor cell viability after birth. Light-induced isomerization of 11-cis to all-trans retinal triggers a conformational change that activates signaling via G-proteins. Subsequent receptor phosphorylation mediates displacement of the bound G-protein alpha subunit by arrestin and terminates signaling. The polypeptide is Rhodopsin (RHO) (Lithobates pipiens (Northern leopard frog)).